A 188-amino-acid polypeptide reads, in one-letter code: MSKKSNKNLAFSLLGLIISMVLLSFASVPIYNLFCKVTGYGGTTAKETVSVYSKVKGTKPIIIEFDANVDKDLPWRFIPRQQRVQIVPGQNTLVFYETENLSDNDIIGTSVYNVTPNKAGKYFVKIHCFCFEEQLLKAGERVLMPVTFYIDKDFELDPEMQDIKVLTLSYSFFKVREMSSLRGNYVSN.

Residues 1 to 8 (MSKKSNKN) are Cytoplasmic-facing. Residues 9–31 (LAFSLLGLIISMVLLSFASVPIY) traverse the membrane as a helical; Signal-anchor for type II membrane protein segment. Topologically, residues 32–188 (NLFCKVTGYG…SSLRGNYVSN (157 aa)) are periplasmic.

Belongs to the COX11/CtaG family.

It is found in the cell inner membrane. Exerts its effect at some terminal stage of cytochrome c oxidase synthesis, probably by being involved in the insertion of the copper B into subunit I. This Rickettsia conorii (strain ATCC VR-613 / Malish 7) protein is Cytochrome c oxidase assembly protein CtaG.